The primary structure comprises 481 residues: Glycogen synthase (481 aa).

ADP-alpha-D-glucose is bound at residue K15.

This sequence belongs to the glycosyltransferase 1 family. Bacterial/plant glycogen synthase subfamily.

The enzyme catalyses [(1-&gt;4)-alpha-D-glucosyl](n) + ADP-alpha-D-glucose = [(1-&gt;4)-alpha-D-glucosyl](n+1) + ADP + H(+). It functions in the pathway glycan biosynthesis; glycogen biosynthesis. Synthesizes alpha-1,4-glucan chains using ADP-glucose. In Mesorhizobium japonicum (strain LMG 29417 / CECT 9101 / MAFF 303099) (Mesorhizobium loti (strain MAFF 303099)), this protein is Glycogen synthase.